A 349-amino-acid chain; its full sequence is MDKLKIVLGIETSCDETAVAIVNSNKEVLSHKILSQQEHAAYGGVVPEIASRAHINYLYELVGSCIEESQLCFNDIDAIAVTAGPGLIGGLIVGIMMAKAISSVTGKPIIEINHLEAHALIIRMFYEIDFPFLLLIMSGGHCQFLVAYDVRCYYKLGSSLDDSLGEVFDKVARMLNLGYPGGPIIEEKSLLGDSGSFTLPRALTNRPGCDFSFSGLKTAVRNIIAGQKCINHELVCNISASFQDCVGDILVNRINNAIVMSKDIDHRINKLVVTGGVAANKLLRNRMSVCANDNGFEILYPPSKLCTDNGVMIGWAGIENLAKGYVSNLNFFPRARWPLENLRFDILRK.

Fe cation contacts are provided by His114 and His118. Residues 136–140 (IMSGG), Asp169, Gly182, and Asn280 each bind substrate. Position 308 (Asp308) interacts with Fe cation.

It belongs to the KAE1 / TsaD family. The cofactor is Fe(2+).

Its subcellular location is the cytoplasm. It catalyses the reaction L-threonylcarbamoyladenylate + adenosine(37) in tRNA = N(6)-L-threonylcarbamoyladenosine(37) in tRNA + AMP + H(+). Functionally, required for the formation of a threonylcarbamoyl group on adenosine at position 37 (t(6)A37) in tRNAs that read codons beginning with adenine. Is involved in the transfer of the threonylcarbamoyl moiety of threonylcarbamoyl-AMP (TC-AMP) to the N6 group of A37, together with TsaE and TsaB. TsaD likely plays a direct catalytic role in this reaction. This chain is tRNA N6-adenosine threonylcarbamoyltransferase, found in Ehrlichia chaffeensis (strain ATCC CRL-10679 / Arkansas).